The following is a 132-amino-acid chain: Small ribosomal subunit protein uS8 (132 aa).

Belongs to the universal ribosomal protein uS8 family. Part of the 30S ribosomal subunit. Contacts proteins S5 and S12.

Functionally, one of the primary rRNA binding proteins, it binds directly to 16S rRNA central domain where it helps coordinate assembly of the platform of the 30S subunit. The polypeptide is Small ribosomal subunit protein uS8 (Gluconacetobacter diazotrophicus (strain ATCC 49037 / DSM 5601 / CCUG 37298 / CIP 103539 / LMG 7603 / PAl5)).